The sequence spans 257 residues: 3-dehydroquinate dehydratase (257 aa).

Residues 50-52 and Arg86 each bind 3-dehydroquinate; that span reads EWR. The active-site Proton donor/acceptor is the His147. Catalysis depends on Lys174, which acts as the Schiff-base intermediate with substrate. Arg216, Ser235, and Gln239 together coordinate 3-dehydroquinate.

The protein belongs to the type-I 3-dehydroquinase family. Homodimer.

The enzyme catalyses 3-dehydroquinate = 3-dehydroshikimate + H2O. It participates in metabolic intermediate biosynthesis; chorismate biosynthesis; chorismate from D-erythrose 4-phosphate and phosphoenolpyruvate: step 3/7. Functionally, involved in the third step of the chorismate pathway, which leads to the biosynthesis of aromatic amino acids. Catalyzes the cis-dehydration of 3-dehydroquinate (DHQ) and introduces the first double bond of the aromatic ring to yield 3-dehydroshikimate. The polypeptide is 3-dehydroquinate dehydratase (Geobacillus thermodenitrificans (strain NG80-2)).